The primary structure comprises 977 residues: Synaptonemal complex protein 2-like (977 aa).

Disordered stretches follow at residues 447-474 (LGSQ…LSNA), 574-593 (QSTE…NSPL), 642-728 (RNKS…QDIM), and 804-824 (TEKN…VFYS). Low complexity predominate over residues 449–462 (SQTSEHSSTTKTSS). The span at 463–474 (ANRSVQKSLSNA) shows a compositional bias: polar residues. Positions 674–693 (SRKEMHRPEDINPKSPHSAE) are enriched in basic and acidic residues.

The protein belongs to the SYCP2 family. Ubiquitinated and gradually degraded by the proteasome during oocyte maturation. Post-translationally, phosphorylated in maturing oocytes, before its degradation. Expressed in immature oocytes (at protein level). Expressed in the ovary.

Its subcellular location is the nucleus. It is found in the chromosome. The protein resides in the centromere. The protein localises to the nucleolus. In terms of biological role, oocyte-specific protein that localizes to centromeres at the dictyate stage and regulates the survival of primordial oocytes. This Xenopus laevis (African clawed frog) protein is Synaptonemal complex protein 2-like (sycp2l).